Consider the following 360-residue polypeptide: UDP-N-acetylglucosamine--N-acetylmuramyl-(pentapeptide) pyrophosphoryl-undecaprenol N-acetylglucosamine transferase (360 aa).

UDP-N-acetyl-alpha-D-glucosamine-binding positions include Thr-15–Gly-17, Asn-124, Arg-165, Ser-191, and Gln-285.

The protein belongs to the glycosyltransferase 28 family. MurG subfamily.

The protein localises to the cell inner membrane. It catalyses the reaction di-trans,octa-cis-undecaprenyl diphospho-N-acetyl-alpha-D-muramoyl-L-alanyl-D-glutamyl-meso-2,6-diaminopimeloyl-D-alanyl-D-alanine + UDP-N-acetyl-alpha-D-glucosamine = di-trans,octa-cis-undecaprenyl diphospho-[N-acetyl-alpha-D-glucosaminyl-(1-&gt;4)]-N-acetyl-alpha-D-muramoyl-L-alanyl-D-glutamyl-meso-2,6-diaminopimeloyl-D-alanyl-D-alanine + UDP + H(+). It participates in cell wall biogenesis; peptidoglycan biosynthesis. Functionally, cell wall formation. Catalyzes the transfer of a GlcNAc subunit on undecaprenyl-pyrophosphoryl-MurNAc-pentapeptide (lipid intermediate I) to form undecaprenyl-pyrophosphoryl-MurNAc-(pentapeptide)GlcNAc (lipid intermediate II). The sequence is that of UDP-N-acetylglucosamine--N-acetylmuramyl-(pentapeptide) pyrophosphoryl-undecaprenol N-acetylglucosamine transferase from Gloeothece citriformis (strain PCC 7424) (Cyanothece sp. (strain PCC 7424)).